The sequence spans 529 residues: UDP-glucuronosyltransferase 2B7 (529 aa).

Residues 1 to 23 (MSVKWTSVILLIQLSFCFSSGNC) form the signal peptide. 3 N-linked (GlcNAc...) asparagine glycosylation sites follow: asparagine 67, asparagine 68, and asparagine 315. UDP-alpha-D-glucuronate is bound by residues 373–379 (THGGANG) and aspartate 398. A helical membrane pass occupies residues 493 to 509 (VIGFLLVCVATVIFIVT).

This sequence belongs to the UDP-glycosyltransferase family.

It localises to the endoplasmic reticulum membrane. It catalyses the reaction glucuronate acceptor + UDP-alpha-D-glucuronate = acceptor beta-D-glucuronoside + UDP + H(+). The enzyme catalyses 17alpha-estradiol + UDP-alpha-D-glucuronate = 17alpha-estradiol 17-O-(beta-D-glucuronate) + UDP + H(+). The catalysed reaction is 17beta-estradiol + UDP-alpha-D-glucuronate = 17beta-estradiol 17-O-(beta-D-glucuronate) + UDP + H(+). It carries out the reaction 2-hydroxy-17beta-estradiol + UDP-alpha-D-glucuronate = 2-hydroxy-17beta-estradiol 3-O-(beta-D-glucuronate) + UDP + H(+). It catalyses the reaction 4-hydroxy-17beta-estradiol + UDP-alpha-D-glucuronate = 17beta-estradiol 4-O-(beta-D-glucuronate) + UDP + H(+). The enzyme catalyses 4-hydroxyestrone + UDP-alpha-D-glucuronate = estrone 4-O-(beta-D-glucuronate) + UDP + H(+). The catalysed reaction is 16alpha-hydroxyestrone + UDP-alpha-D-glucuronate = 16alpha-hydroxyestrone 16-O-(beta-D-glucuronate) + UDP + H(+). It carries out the reaction 16alpha,17beta-estriol + UDP-alpha-D-glucuronate = 16alpha,17beta-estriol 16-O-(beta-D-glucuronate) + UDP + H(+). It catalyses the reaction 16beta,17beta-estriol + UDP-alpha-D-glucuronate = 16beta,17beta-estriol 16-O-(beta-D-glucuronate) + UDP + H(+). The enzyme catalyses 16alpha,17alpha-estriol + UDP-alpha-D-glucuronate = 16alpha,17alpha-estriol 16-O-(beta-D-glucuronate) + UDP + H(+). The catalysed reaction is 16alpha,17alpha-estriol + UDP-alpha-D-glucuronate = 16alpha,17alpha-estriol 17-O-(beta-D-glucuronate) + UDP + H(+). It carries out the reaction epitestosterone + UDP-alpha-D-glucuronate = epitestosterone 17-O-(beta-D-glucuronate) + UDP + H(+). It catalyses the reaction hyodeoxycholate + UDP-alpha-D-glucuronate = hyodeoxycholate 6-O-(beta-D-glucuronate) + UDP + H(+). The enzyme catalyses hyocholate + UDP-alpha-D-glucuronate = hyocholate 6-O-(beta-D-glucuronate) + UDP + H(+). The catalysed reaction is all-trans-retinoate + UDP-alpha-D-glucuronate = all-trans-retinoyl-1-O-(beta-D-glucuronate) + UDP. It carries out the reaction all-trans-4-hydroxyretinoate + UDP-alpha-D-glucuronate = all-trans-4-hydroxy-4-O-(beta-D-glucuronide)-retinoate + UDP + H(+). It catalyses the reaction (E)-ferulate + UDP-alpha-D-glucuronate = (E)-ferulic acid beta-D-glucuronate ester + UDP. The enzyme catalyses 8-iso-prostaglandin F2alpha + UDP-alpha-D-glucuronate = 8-iso-prostaglandin F2alpha-glucuronide + UDP + H(+). The catalysed reaction is 5-epi-5-F2t-IsoP + UDP-alpha-D-glucuronate = 5-epi-5-F2t-IsoP-glucuronide + UDP + H(+). It carries out the reaction (5Z,8Z,11Z,14Z)-eicosatetraenoate + UDP-alpha-D-glucuronate = O-[(5Z),(8Z),(11Z),(14Z)-eicosatetraenoyl]-beta-D-glucuronate + UDP. It catalyses the reaction 15-hydroxy-(5Z,8Z,11Z,13E)-eicosatetraenoate + UDP-alpha-D-glucuronate = 15-O-(beta-D-glucuronosyl)-(5Z,8Z,11Z,14Z)-eicosatetraenoate + UDP + H(+). The enzyme catalyses 20-hydroxy-(5Z,8Z,11Z,14Z)-eicosatetraenoate + UDP-alpha-D-glucuronate = 20-O-(beta-D-glucuronosyl)-(5Z,8Z,11Z,14Z)-eicosatetraenoate + UDP + H(+). The catalysed reaction is (E)-ferulate + UDP-alpha-D-glucuronate = (E)-4-O-(beta-D-glucuronosyl)-ferulate + UDP + H(+). It carries out the reaction prostaglandin B1 + UDP-alpha-D-glucuronate = 15-O-(beta-D-glucuronosyl)-prostaglandin B1 + UDP + H(+). It catalyses the reaction mycophenolate + UDP-alpha-D-glucuronate = mycophenolic acid O-acyl-beta-D-glucuronide + UDP. The enzyme catalyses losartan + UDP-alpha-D-glucuronate = losartan-2-N-beta-D-glucuronide + UDP. The catalysed reaction is candesartan + UDP-alpha-D-glucuronate = candesartan O-beta-D-glucuronoside + UDP. It carries out the reaction candesartan + UDP-alpha-D-glucuronate = candesartan-2-N-beta-D-glucuronide + UDP. It catalyses the reaction zolasartan + UDP-alpha-D-glucuronate = zolarsartan O-beta-D-glucuronoside + UDP. Functionally, UDP-glucuronosyltransferase (UGT) that catalyzes phase II biotransformation reactions in which lipophilic substrates are conjugated with glucuronic acid to increase the metabolite's water solubility, thereby facilitating excretion into either the urine or bile. Essential for the elimination and detoxification of drugs, xenobiotics and endogenous compounds. Catalyzes the glucuronidation of endogenous steroid hormones such as androgens (epitestosterone, androsterone) and estrogens (estradiol, epiestradiol, estriol, catechol estrogens). Also regulates the levels of retinoic acid, a major metabolite of vitamin A involved in apoptosis, cellular growth and differentiation, and embryonic development. Contributes to bile acid (BA) detoxification by catalyzing the glucuronidation of BA substrates, which are natural detergents for dietary lipids absorption. Involved in the glucuronidation of arachidonic acid (AA) and AA-derived eicosanoids including 15-HETE, 20-HETE, PGE2, PGB1 and F2-isoprostanes (8-iso-PGF2alpha and 5-epi-5-F2t-IsoP). Involved in the glucuronidation of the phytochemical ferulic acid at the phenolic or the carboxylic acid group. Involved in the glucuronidation of the AGTR1 angiotensin receptor antagonist losartan, caderastan and zolarsatan, drugs which can inhibit the effect of angiotensin II. Also metabolizes mycophenolate, an immunosuppressive agent. In Homo sapiens (Human), this protein is UDP-glucuronosyltransferase 2B7.